Consider the following 178-residue polypeptide: CASP-like protein 2A2 (178 aa).

At methionine 1–threonine 22 the chain is on the cytoplasmic side. Residues valine 23 to isoleucine 43 form a helical membrane-spanning segment. Residues lysine 44–asparagine 69 are Extracellular-facing. A helical membrane pass occupies residues glycine 70–isoleucine 90. Topologically, residues serine 91 to arginine 96 are cytoplasmic. The helical transmembrane segment at threonine 97–alanine 117 threads the bilayer. Residues glutamate 118–lysine 145 are Extracellular-facing. The helical transmembrane segment at alanine 146–isoleucine 166 threads the bilayer. Residues serine 167 to proline 178 lie on the Cytoplasmic side of the membrane.

Belongs to the Casparian strip membrane proteins (CASP) family. Homodimer and heterodimers.

The protein resides in the cell membrane. The protein is CASP-like protein 2A2 of Arabidopsis lyrata subsp. lyrata (Lyre-leaved rock-cress).